Consider the following 321-residue polypeptide: Nucleotide-binding protein GOX0815 (321 aa).

Gly-27–Ser-34 contributes to the ATP binding site. Residue Asp-72 to Ser-75 coordinates GTP.

It belongs to the RapZ-like family.

Functionally, displays ATPase and GTPase activities. The sequence is that of Nucleotide-binding protein GOX0815 from Gluconobacter oxydans (strain 621H) (Gluconobacter suboxydans).